Reading from the N-terminus, the 136-residue chain is Large-conductance mechanosensitive channel (136 aa).

The next 2 helical transmembrane spans lie at 10–30 and 76–96; these read FAMR…AAFG and GVFI…FMAI.

The protein belongs to the MscL family. In terms of assembly, homopentamer.

It localises to the cell inner membrane. Channel that opens in response to stretch forces in the membrane lipid bilayer. May participate in the regulation of osmotic pressure changes within the cell. The polypeptide is Large-conductance mechanosensitive channel (Escherichia coli O127:H6 (strain E2348/69 / EPEC)).